Here is a 186-residue protein sequence, read N- to C-terminus: MLIGYVRVSTNEQNTALQRNALESAGCELIFEDKASGKQTERPGLKKVLRMLSRGDTLVVWKLDRLGRSMRHLVVLVEELRDRGINFRSLTDSIDTSTPMGRFFFHVMGALAEMERELIVERTRAGLDAARAEGRIGGRRPKYQEETWQQMRRLLENGIPRKQVAIIYDVAVSTLYKKFPASSFQS.

A Resolvase/invertase-type recombinase catalytic domain is found at 1–134 (MLIGYVRVST…AGLDAARAEG (134 aa)). Ser9 acts as the O-(5'-phospho-DNA)-serine intermediate in catalysis. Residues 161-180 (RKQVAIIYDVAVSTLYKKFP) constitute a DNA-binding region (H-T-H motif).

This sequence belongs to the site-specific recombinase resolvase family.

Performs inversion of a viral 3 kp segment (C-segment) that encodes two alternate pairs of tail fiber proteins thereby modifying the host specificity of the virus. This chain is DNA-invertase (cin), found in Enterobacteria phage P7 (Bacteriophage P7).